The sequence spans 255 residues: 3-deoxy-manno-octulosonate cytidylyltransferase (255 aa).

It belongs to the KdsB family.

The protein resides in the cytoplasm. The catalysed reaction is 3-deoxy-alpha-D-manno-oct-2-ulosonate + CTP = CMP-3-deoxy-beta-D-manno-octulosonate + diphosphate. It functions in the pathway nucleotide-sugar biosynthesis; CMP-3-deoxy-D-manno-octulosonate biosynthesis; CMP-3-deoxy-D-manno-octulosonate from 3-deoxy-D-manno-octulosonate and CTP: step 1/1. The protein operates within bacterial outer membrane biogenesis; lipopolysaccharide biosynthesis. In terms of biological role, activates KDO (a required 8-carbon sugar) for incorporation into bacterial lipopolysaccharide in Gram-negative bacteria. The chain is 3-deoxy-manno-octulosonate cytidylyltransferase from Psychromonas ingrahamii (strain DSM 17664 / CCUG 51855 / 37).